Consider the following 395-residue polypeptide: NAD(P)H-quinone oxidoreductase subunit H (395 aa).

The protein belongs to the complex I 49 kDa subunit family. As to quaternary structure, NDH-1 can be composed of about 15 different subunits; different subcomplexes with different compositions have been identified which probably have different functions.

It localises to the cellular thylakoid membrane. It carries out the reaction a plastoquinone + NADH + (n+1) H(+)(in) = a plastoquinol + NAD(+) + n H(+)(out). It catalyses the reaction a plastoquinone + NADPH + (n+1) H(+)(in) = a plastoquinol + NADP(+) + n H(+)(out). In terms of biological role, NDH-1 shuttles electrons from an unknown electron donor, via FMN and iron-sulfur (Fe-S) centers, to quinones in the respiratory and/or the photosynthetic chain. The immediate electron acceptor for the enzyme in this species is believed to be plastoquinone. Couples the redox reaction to proton translocation, and thus conserves the redox energy in a proton gradient. Cyanobacterial NDH-1 also plays a role in inorganic carbon-concentration. The protein is NAD(P)H-quinone oxidoreductase subunit H of Prochlorococcus marinus (strain MIT 9515).